A 1071-amino-acid polypeptide reads, in one-letter code: DNA-directed RNA polymerase subunit beta (1071 aa).

Belongs to the RNA polymerase beta chain family. In terms of assembly, in plastids the minimal PEP RNA polymerase catalytic core is composed of four subunits: alpha, beta, beta', and beta''. When a (nuclear-encoded) sigma factor is associated with the core the holoenzyme is formed, which can initiate transcription.

The protein localises to the plastid. It localises to the chloroplast. It catalyses the reaction RNA(n) + a ribonucleoside 5'-triphosphate = RNA(n+1) + diphosphate. DNA-dependent RNA polymerase catalyzes the transcription of DNA into RNA using the four ribonucleoside triphosphates as substrates. This is DNA-directed RNA polymerase subunit beta from Nymphaea alba (White water-lily).